The primary structure comprises 153 residues: Melatonin receptor type 1A X2.0 (153 aa).

The Cytoplasmic segment spans residues 1–12 (HSSWYNRLFSNS). The chain crosses the membrane as a helical span at residues 13–33 (GTICYVGLVWVLALGAILPNL). Over 34–57 (FVGSLRCDPRIFSCTFAQYVSSYY) the chain is Extracellular. A helical transmembrane segment spans residues 58 to 78 (TIAVVIFHFFLPIGVVSYCYL). At 79–112 (RIWVLVLNIRHRVKPDRHLHHQTWPYNIHGFITM) the chain is on the cytoplasmic side. The chain crosses the membrane as a helical span at residues 113-133 (FVVFVLFAVCWGPLNIIGLTV). Residues 134 to 145 (AIYPPLGDSIPQ) are Extracellular-facing. Residues 146–153 (WLFVASYF) form a helical membrane-spanning segment.

It belongs to the G-protein coupled receptor 1 family.

The protein localises to the cell membrane. In terms of biological role, high affinity receptor for melatonin. The activity of this receptor is mediated by pertussis toxin sensitive G proteins that inhibits adenylate cyclase activity. The protein is Melatonin receptor type 1A X2.0 of Xenopus laevis (African clawed frog).